The chain runs to 367 residues: BTB/POZ domain-containing protein Tiwaz (367 aa).

Disordered regions lie at residues 16–46 (LTVDSSCPKRKKCDMDRERERDVKALEPRDL) and 62–87 (SSPTVSPTISNSSSPTPTPPASSSVT). Basic and acidic residues predominate over residues 28–45 (CDMDRERERDVKALEPRD). The region spanning 135–205 (APVHIDVGGT…MRNSRLLIAE (71 aa)) is the BTB domain. The disordered stretch occupies residues 240 to 261 (GNYLVAPPTPPARHIKTSPRTS).

Functionally, functions with the transcription factor TfAP-2 to regulate octopamine neuronal signaling pathways that control behaviors such as male aggression, male mating, and the initiation of feeding. Required for TfAP-2 transcriptional activity in octopaminergic neurons. Functions with TfAP-2 to regulate expression of genes which are involved in promoting octopamine production and secretion from octopaminergic neurons, such as Tbh and Vmat. Octopamine then modulates feeding and male aggression by regulating the expression of the satiation hormone Dsk in insulin-producing cells (IPCs). Functions with octopamine and Dsk as part of a negative feedback loop to prevent overeating; acts with TfAP-2 to regulate octopamine signaling pathways that initiate feeding, then octopamine activates expression of Dsk which inhibits consummatory behavior. May also be involved in negatively regulating nociception in larvae to prevent spontaneous pain and hyperalgesia. This Drosophila melanogaster (Fruit fly) protein is BTB/POZ domain-containing protein Tiwaz.